A 114-amino-acid chain; its full sequence is Non-specific lipid-transfer protein 1 (114 aa).

Positions 1–23 are cleaved as a signal peptide; sequence MEIAGKIACFVVLCMVVAAPCAE. Intrachain disulfides connect Cys27–Cys73, Cys37–Cys50, Cys51–Cys96, and Cys71–Cys110.

This sequence belongs to the plant LTP family. In terms of tissue distribution, high expression in leaf epidermis and shoot apex, and also in root epidermis during seedling germination.

In terms of biological role, plant non-specific lipid-transfer proteins transfer phospholipids as well as galactolipids across membranes. Binds cis-unsaturated fatty acids and jasmonic acid with a higher affinity than linear chain fatty acids. Formation of the complex with jasmonic acid results in a conformational change facilitating the LPT1 binding on the elicitin plasma membrane receptor that is known to be involved in plant defense induction. May also play a role in wax or cutin deposition in the cell walls of expanding epidermal cells and certain secretory tissues. The chain is Non-specific lipid-transfer protein 1 (LTP1) from Nicotiana tabacum (Common tobacco).